The sequence spans 320 residues: ATP-dependent 6-phosphofructokinase (320 aa).

An ATP-binding site is contributed by glycine 11. ADP is bound at residue 21-25; that stretch reads RAVVR. Residues 72–73 and 102–105 contribute to the ATP site; these read RC and GDGS. Aspartate 103 is a binding site for Mg(2+). 125–127 contributes to the substrate binding site; sequence TID. Aspartate 127 acts as the Proton acceptor in catalysis. Residue arginine 154 participates in ADP binding. Substrate contacts are provided by residues arginine 162 and 169–171; that span reads MGR. ADP is bound by residues 185-187 and 214-216; these read GAE and KTH. Substrate is bound by residues glutamate 223, arginine 244, and 250–253; that span reads HIQR.

This sequence belongs to the phosphofructokinase type A (PFKA) family. ATP-dependent PFK group I subfamily. Prokaryotic clade 'B1' sub-subfamily. In terms of assembly, homotetramer. Requires Mg(2+) as cofactor.

It localises to the cytoplasm. It catalyses the reaction beta-D-fructose 6-phosphate + ATP = beta-D-fructose 1,6-bisphosphate + ADP + H(+). It functions in the pathway carbohydrate degradation; glycolysis; D-glyceraldehyde 3-phosphate and glycerone phosphate from D-glucose: step 3/4. With respect to regulation, allosterically activated by ADP and other diphosphonucleosides, and allosterically inhibited by phosphoenolpyruvate. Functionally, catalyzes the phosphorylation of D-fructose 6-phosphate to fructose 1,6-bisphosphate by ATP, the first committing step of glycolysis. This Clostridium botulinum (strain Alaska E43 / Type E3) protein is ATP-dependent 6-phosphofructokinase.